We begin with the raw amino-acid sequence, 460 residues long: Amino acid transporter AVT6A (460 aa).

The next 11 helical transmembrane spans lie at 45-65, 66-86, 120-140, 172-192, 199-219, 238-258, 281-301, 336-356, 371-391, 394-414, and 427-447; these read FSGAVFNLATTIIGAGIMALP, ATMKILGLGLGITMIVVMAFL, ILLQVAVLVNNIGVLIVYMII, AAILLITTLGVFAPLACFKRI, SALSVALAVVFLIITAGISIM, LTSFWNLFTVVPVLVTAFICH, ALMLCSSVYIMTSIFGFLLFG, LMLVFPIVFYPLRINIDGLLF, CLTAGLISVIFLGANFIPSIW, FQFTGATAAVCLGFIFPASII, and TTLAIFMIVLAVLSNAIAIYS.

It belongs to the amino acid/polyamine transporter 2 family. Amino acid/auxin permease (AAAP) (TC 2.A.18.6) subfamily.

The protein localises to the membrane. This chain is Amino acid transporter AVT6A, found in Arabidopsis thaliana (Mouse-ear cress).